The primary structure comprises 301 residues: tRNA dimethylallyltransferase (301 aa).

Residue 5 to 12 (GPTASGKS) coordinates ATP. 7-12 (TASGKS) is a substrate binding site. The interval 30 to 33 (DSMQ) is interaction with substrate tRNA.

This sequence belongs to the IPP transferase family. In terms of assembly, monomer. Mg(2+) serves as cofactor.

The catalysed reaction is adenosine(37) in tRNA + dimethylallyl diphosphate = N(6)-dimethylallyladenosine(37) in tRNA + diphosphate. Catalyzes the transfer of a dimethylallyl group onto the adenine at position 37 in tRNAs that read codons beginning with uridine, leading to the formation of N6-(dimethylallyl)adenosine (i(6)A). This Rhodopseudomonas palustris (strain TIE-1) protein is tRNA dimethylallyltransferase.